Reading from the N-terminus, the 220-residue chain is Small ribosomal subunit protein uS3c (220 aa).

The KH type-2 domain occupies 39–120 (IRDFIKNYVK…KLIIDIIRIT (82 aa)).

It belongs to the universal ribosomal protein uS3 family. In terms of assembly, part of the 30S ribosomal subunit.

Its subcellular location is the plastid. This is Small ribosomal subunit protein uS3c (rps3) from Epifagus virginiana (Beechdrops).